The primary structure comprises 927 residues: MSTLNNLTKTLTQQVDDGPISAVRLVKGYDNSYALNAAGQVTALSIGNSSLKKLVLGTEAQALEYLYLSGSESLKEVVFEVPLPHLTHLYLNNCAIKDITIPKGFRSLQQVYLQKNGLTELVFEGDCPALVLLDVSENQLKGLSFHSGFRALKYIYATNNVLQKITFNRSMRLLNTLHLAKNQLTELAPFLSEIETMETLYLQGNQLLRIDREIWDRDLNCWDTMKGYLTSLNKGNIIREYLHEAKMILIGNGEVGKTSIRLKLLDINAPLPDKKDRTPGLDIVPYTIANLSSAQTGLPASTSFTFNIWDFGGQGKYREIQQLFCSRKSLYLYVTAYDDTADYNELYVGYEYWLAMANAYNNDSGQHSPVIYVQNKNDMGEKPINEEEVKHKFGNVGAFIKISCVDKEQFTALPKLIVKSISKISEDIFTVQYNSEWLGVKEDLNELKNQGTNYISKEEFITICTERGLSEDEIRAWLTVLDRIGAVIYFGDNEKLKDWIVLNPIWVKDAICKVIDFEFYDDIATLKPSFLPKIWEEYSESEREKLLQLLISYHFCYKEEESFIVPALFTENQPKYPEHLSSFDCEIKLKYVSFLPAGTLHKFMVKLHDKIYNELRWKKGVVLQDGATNTYAEVTERWKEHSIYIRLKDKKGQHPLWQEIQKTLQELNEELKTTKLMQLDFEVYCFYNNKWKAKPDIEDLCELDSTNIFKFMFGLSSPVKEYISQKPTPLLGKAKLSIIFLTADPENKNPIGASVQKQRIENTISDAFEFYNNLETKYNEIGSNTVGKDIVHITVHGIPDQLFFVHDKHTDQSNPVQSDYLCKQLEKTKQVKKLIVLIACNSETTAKKIVDGGLTKYAIGTTIDISSKAAIDFSEKFYDLLKNSPLQIESVFEETCYELNQDKYRAKLDDGEFYDYSKVFKIFKKTT.

4 LRR repeats span residues 38–61 (AGQV…TEAQ), 83–107 (LPHL…GFRS), 109–125 (QQVY…VFEG), and 127–151 (CPAL…GFRA). Residues 152–170 (LKYIYATNNVLQKITFNRS) form an LRR 5 region. LRR repeat units follow at residues 171–194 (MRLL…LSEI) and 195–217 (ETME…IWDR). Residues 436–623 (EWLGVKEDLN…ELRWKKGVVL (188 aa)) enclose the COR domain. Catalysis depends on residues His796 and Cys840.

Its function is as follows. A dedicated protease for gasdermin bGSDM; cleaves the bGSDM precursor, releasing the pore-forming moiety, which integrates into the membrane and triggers cell death. Probably involved in defense against bacteriophages. Expression of bGSDM and this neighboring protease is highly toxic in E.coli. Cells expressing the gene pair stop dividing and lose membrane integrity. Both proteins are required to kill E.coli. The bGSDM recognition site is larger than the 8 residues surrounding the cleavage site; replacement of the endogenous recognition site by the Runella site (NRVLGENM) in a number of other bGSDMs is not sufficient for them to be cleaved. In Runella zeae (strain ATCC BAA-293 / DSM 19591 / LMG 21438 / NS12), this protein is Roc-COR-CHAT protease.